The chain runs to 1356 residues: Partitioning defective 3 homolog (1356 aa).

A Phosphoserine modification is found at S25. Disordered stretches follow at residues 81–100 (EQDP…GTQS) and 154–262 (SVSD…GLEH). Position 91 is a phosphothreonine (T91). Residues 91-100 (TSASSTGTQS) are compositionally biased toward low complexity. Composition is skewed to polar residues over residues 154–163 (SVSDSNFSSE) and 171–187 (TRWS…TAGS). 2 positions are modified to phosphoserine: S156 and S174. A compositionally biased stretch (basic and acidic residues) spans 190–203 (TCDRKKDENYRSLP). Residues 204–224 (RDTSNWSNQFQRDNARSSLSA) are compositionally biased toward polar residues. Basic and acidic residues predominate over residues 246-260 (DNSRVEPVGHADTGL). The PDZ 1 domain maps to 271 to 359 (MVKLVEVPND…TPIIWFHVVP (89 aa)). Position 383 is a phosphoserine (S383). The interval 408-448 (LNHPPEQIDSHSRLPHSAHPSGKPPSAPASAPQNVFSTTVS) is disordered. PDZ domains follow at residues 461 to 546 (NIQL…LVFR) and 590 to 677 (EVPL…GMIQ). A Phosphotyrosine modification is found at Y489. Phosphoserine is present on residues S692, S695, S715, S728, A792, S809, and S827. The interaction with PRKCI and PRKCZ stretch occupies residues 712 to 936 (RRISHSLYSG…AAIDKSYDKP (225 aa)). K834 carries the N6-acetyllysine modification. Phosphoserine is present on S837. The residue at position 851 (K851) is an N6-acetyllysine. Residues S852 and S873 each carry the phosphoserine modification. 2 disordered regions span residues 865-886 (TVDD…GLKK) and 932-1025 (SYDK…DMFR). K885 is modified (N6-acetyllysine). The segment at 935-1356 (KPAVDDDDEG…TPEKGRPFYS (422 aa)) is interaction with FRMD4A. Residues 939-953 (DDDDEGMETLEEDTE) are compositionally biased toward acidic residues. S962 carries the phosphoserine; by AURKA modification. Residues 968–982 (DQPSHSLERQMNGNQ) show a composition bias toward polar residues. Residues S971 and S973 each carry the phosphoserine modification. Residues 983–1009 (EKGDKTDRKKDKTGKEKKKDRDKEKDK) are compositionally biased toward basic and acidic residues. S1046 is modified (phosphoserine). Positions 1049–1077 (SEEERIRMKQEQERIQAKTREFRERQARE) form a coiled coil. A disordered region spans residues 1129–1356 (QVKKPRNSKP…TPEKGRPFYS (228 aa)). Polar residues predominate over residues 1136–1149 (SKPSPVDSNRSTPS). The span at 1150–1177 (NHDRIQRLRQEFQQAKQDEDVEDRRRTY) shows a compositional bias: basic and acidic residues. 3 coiled-coil regions span residues 1151–1174 (HDRI…EDRR), 1201–1224 (VQMQ…YSSL), and 1280–1301 (MLET…MKKQ). Low complexity predominate over residues 1196–1205 (SVSVEVQMQR). Residues 1221 to 1245 (YSSLPRQSRKNASSVSQDSWEQNYS) show a composition bias toward polar residues. Residues 1285 to 1298 (ELLRQEQRRKEQQM) are compositionally biased toward basic and acidic residues. Polar residues predominate over residues 1337–1346 (SQVARLNRLQ). Basic and acidic residues predominate over residues 1347-1356 (TPEKGRPFYS). At K1350 the chain carries N6-acetyllysine.

The protein belongs to the PAR3 family. As to quaternary structure, interacts (via PDZ 1 domain) with F11R/JAM1, PARD6A and PARD6B. Interacts with PRCKI and CDH5. Interacts (via PDZ 3 domain) with PTEN (via C-terminus). Part of a complex with PARD6A or PARD6B, PRKCI or PRKCZ and CDC42 or RAC1. Component of a complex whose core is composed of ARHGAP17, AMOT, PALS1, PATJ and PARD3/PAR3. Interacts with LIMK2, AURKA and AURKB. Component of the Par polarity complex, composed of at least phosphorylated PRKCZ, PARD3 and TIAM1. Directly interacts with TIAM1 and TIAM2. Interacts with ECT2, FBF1 and SIRT2. Interacts (via coiled-coil domain) with FRMD4A. Found in a complex with PARD3, CYTH1 and FRMD4A. Interacts with SAPCD2. Interacts with PRKCA. Interacts with PRKCZ. In terms of processing, acetylated. Deacetylated by SIRT2, thereby inhibiting Schwann cell peripheral myelination. Phosphorylation at Ser-827 by PRKCZ and PRKCI occurs at the most apical tip of epithelial cell-cell contacts during the initial phase of tight junction formation and may promote dissociation of the complex with PARD6. EGF-induced Tyr-1127 phosphorylation mediates dissociation from LIMK2. Phosphorylation by AURKA at Ser-962 is required for the normal establishment of neuronal polarity. In terms of tissue distribution, widely expressed.

It localises to the cytoplasm. The protein resides in the endomembrane system. Its subcellular location is the cell junction. The protein localises to the tight junction. It is found in the adherens junction. It localises to the cell membrane. The protein resides in the cell cortex. Its subcellular location is the cytoskeleton. Its function is as follows. Adapter protein involved in asymmetrical cell division and cell polarization processes. Seems to play a central role in the formation of epithelial tight junctions. Targets the phosphatase PTEN to cell junctions. Involved in Schwann cell peripheral myelination. Association with PARD6B may prevent the interaction of PARD3 with F11R/JAM1, thereby preventing tight junction assembly. The PARD6-PARD3 complex links GTP-bound Rho small GTPases to atypical protein kinase C proteins. Required for establishment of neuronal polarity and normal axon formation in cultured hippocampal neurons. The sequence is that of Partitioning defective 3 homolog from Homo sapiens (Human).